Reading from the N-terminus, the 93-residue chain is Small ribosomal subunit protein uS19 (93 aa).

It belongs to the universal ribosomal protein uS19 family.

Protein S19 forms a complex with S13 that binds strongly to the 16S ribosomal RNA. This is Small ribosomal subunit protein uS19 from Campylobacter jejuni subsp. jejuni serotype O:6 (strain 81116 / NCTC 11828).